The following is a 215-amino-acid chain: Pyrrolidone-carboxylate peptidase (215 aa).

Catalysis depends on residues E80, C143, and H167.

Belongs to the peptidase C15 family. In terms of assembly, homotetramer.

The protein localises to the cytoplasm. The catalysed reaction is Release of an N-terminal pyroglutamyl group from a polypeptide, the second amino acid generally not being Pro.. Removes 5-oxoproline from various penultimate amino acid residues except L-proline. This is Pyrrolidone-carboxylate peptidase from Bacillus cereus (strain ATCC 10987 / NRS 248).